We begin with the raw amino-acid sequence, 330 residues long: Phosphate acyltransferase (330 aa).

The protein belongs to the PlsX family. In terms of assembly, homodimer. Probably interacts with PlsY.

It is found in the cytoplasm. It carries out the reaction a fatty acyl-[ACP] + phosphate = an acyl phosphate + holo-[ACP]. It participates in lipid metabolism; phospholipid metabolism. In terms of biological role, catalyzes the reversible formation of acyl-phosphate (acyl-PO(4)) from acyl-[acyl-carrier-protein] (acyl-ACP). This enzyme utilizes acyl-ACP as fatty acyl donor, but not acyl-CoA. The sequence is that of Phosphate acyltransferase from Streptococcus pneumoniae (strain JJA).